Here is a 227-residue protein sequence, read N- to C-terminus: Cytochrome c oxidase subunit 2 (227 aa).

Topologically, residues 1–14 (MAHATQVGLQDATS) are mitochondrial intermembrane. The chain crosses the membrane as a helical span at residues 15–45 (PIMEELISFHDHALMIIFLISFLVLYALFLT). Over 46-59 (LTTKLTNTNITDAQ) the chain is Mitochondrial matrix. Residues 60 to 87 (EMETVWTILPAIILVLIALPSLRILYLT) form a helical membrane-spanning segment. The Mitochondrial intermembrane portion of the chain corresponds to 88–227 (DEINDPSFTI…IFEMGPVFTL (140 aa)). Residues His161, Cys196, Glu198, Cys200, His204, and Met207 each coordinate Cu cation. Glu198 provides a ligand contact to Mg(2+).

It belongs to the cytochrome c oxidase subunit 2 family. As to quaternary structure, component of the cytochrome c oxidase (complex IV, CIV), a multisubunit enzyme composed of 14 subunits. The complex is composed of a catalytic core of 3 subunits MT-CO1, MT-CO2 and MT-CO3, encoded in the mitochondrial DNA, and 11 supernumerary subunits COX4I, COX5A, COX5B, COX6A, COX6B, COX6C, COX7A, COX7B, COX7C, COX8 and NDUFA4, which are encoded in the nuclear genome. The complex exists as a monomer or a dimer and forms supercomplexes (SCs) in the inner mitochondrial membrane with NADH-ubiquinone oxidoreductase (complex I, CI) and ubiquinol-cytochrome c oxidoreductase (cytochrome b-c1 complex, complex III, CIII), resulting in different assemblies (supercomplex SCI(1)III(2)IV(1) and megacomplex MCI(2)III(2)IV(2)). Found in a complex with TMEM177, COA6, COX18, COX20, SCO1 and SCO2. Interacts with TMEM177 in a COX20-dependent manner. Interacts with COX20. Interacts with COX16. Cu cation is required as a cofactor.

It localises to the mitochondrion inner membrane. It carries out the reaction 4 Fe(II)-[cytochrome c] + O2 + 8 H(+)(in) = 4 Fe(III)-[cytochrome c] + 2 H2O + 4 H(+)(out). Its function is as follows. Component of the cytochrome c oxidase, the last enzyme in the mitochondrial electron transport chain which drives oxidative phosphorylation. The respiratory chain contains 3 multisubunit complexes succinate dehydrogenase (complex II, CII), ubiquinol-cytochrome c oxidoreductase (cytochrome b-c1 complex, complex III, CIII) and cytochrome c oxidase (complex IV, CIV), that cooperate to transfer electrons derived from NADH and succinate to molecular oxygen, creating an electrochemical gradient over the inner membrane that drives transmembrane transport and the ATP synthase. Cytochrome c oxidase is the component of the respiratory chain that catalyzes the reduction of oxygen to water. Electrons originating from reduced cytochrome c in the intermembrane space (IMS) are transferred via the dinuclear copper A center (CU(A)) of subunit 2 and heme A of subunit 1 to the active site in subunit 1, a binuclear center (BNC) formed by heme A3 and copper B (CU(B)). The BNC reduces molecular oxygen to 2 water molecules using 4 electrons from cytochrome c in the IMS and 4 protons from the mitochondrial matrix. The protein is Cytochrome c oxidase subunit 2 (MT-CO2) of Hylobates lar (Lar gibbon).